The primary structure comprises 220 residues: MPTNSQDTTVLHALFGGTFDPIHYGHLRPVEALAAEAGLNRVTLLPNHVPPHRPQPEANAQQRLKMVELAIAGNPLFAVDDRELHRTTPSYTIETLEAIRKERGAALPLAFIIGQDSLLTLHKWHRWQSLLDTCHLLVLARPGYNDRMDTPELQQWLEQHQVTDAALLSRQPQGYIYLADTPQLEISATEIRQRRHQGLNCDDLLPRSVQRYIELQGLYR.

This sequence belongs to the NadD family.

It catalyses the reaction nicotinate beta-D-ribonucleotide + ATP + H(+) = deamido-NAD(+) + diphosphate. The protein operates within cofactor biosynthesis; NAD(+) biosynthesis; deamido-NAD(+) from nicotinate D-ribonucleotide: step 1/1. Functionally, catalyzes the reversible adenylation of nicotinate mononucleotide (NaMN) to nicotinic acid adenine dinucleotide (NaAD). This chain is Probable nicotinate-nucleotide adenylyltransferase, found in Serratia proteamaculans (strain 568).